Reading from the N-terminus, the 69-residue chain is Guanine nucleotide-binding protein G(I)/G(S)/G(O) subunit gamma-T2 (69 aa).

Cysteine 66 carries the cysteine methyl ester modification. Cysteine 66 carries the S-farnesyl cysteine lipid modification. The propeptide at 67–69 (LIS) is removed in mature form.

It belongs to the G protein gamma family. G proteins are composed of 3 units, alpha, beta and gamma. Retinal cones.

It localises to the cell membrane. In terms of biological role, guanine nucleotide-binding proteins (G proteins) are involved as a modulator or transducer in various transmembrane signaling systems. The beta and gamma chains are required for the GTPase activity, for replacement of GDP by GTP, and for G protein-effector interaction. In Homo sapiens (Human), this protein is Guanine nucleotide-binding protein G(I)/G(S)/G(O) subunit gamma-T2 (GNGT2).